The primary structure comprises 240 residues: Proteasome subunit beta type-1 (240 aa).

An N-acetylmethionine modification is found at methionine 1. Residues 1-27 constitute a propeptide that is removed on maturation; that stretch reads MLSTAAYRDVERELGMGPHGSAGPVQL. The O-linked (GlcNAc) serine glycan is linked to serine 57. Phosphoserine is present on residues serine 61 and serine 67. Tyrosine 149 is subject to Phosphotyrosine. Serine 161 is modified (phosphoserine). An N6-acetyllysine modification is found at lysine 203. A glycan (O-linked (GlcNAc) serine) is linked at serine 208.

It belongs to the peptidase T1B family. In terms of assembly, the 26S proteasome consists of a 20S proteasome core and two 19S regulatory subunits. The 20S proteasome core is a barrel-shaped complex made of 28 subunits that are arranged in four stacked rings. The two outer rings are each formed by seven alpha subunits, and the two inner rings are formed by seven beta subunits. The proteolytic activity is exerted by three beta-subunits PSMB5, PSMB6 and PSMB7. Interacts with SERPINB2. Interacts with RFPL4A. In terms of tissue distribution, detected in liver (at protein level).

The protein localises to the cytoplasm. It is found in the nucleus. Its function is as follows. Non-catalytic component of the 20S core proteasome complex involved in the proteolytic degradation of most intracellular proteins. This complex plays numerous essential roles within the cell by associating with different regulatory particles. Associated with two 19S regulatory particles, forms the 26S proteasome and thus participates in the ATP-dependent degradation of ubiquitinated proteins. The 26S proteasome plays a key role in the maintenance of protein homeostasis by removing misfolded or damaged proteins that could impair cellular functions, and by removing proteins whose functions are no longer required. Associated with the PA200 or PA28, the 20S proteasome mediates ubiquitin-independent protein degradation. This type of proteolysis is required in several pathways including spermatogenesis (20S-PA200 complex) or generation of a subset of MHC class I-presented antigenic peptides (20S-PA28 complex). The polypeptide is Proteasome subunit beta type-1 (Psmb1) (Mus musculus (Mouse)).